Reading from the N-terminus, the 418-residue chain is Tyrosine--tRNA ligase 1 (418 aa).

Residue Tyr-34 coordinates L-tyrosine. Positions 39-48 (PTADSLHLGH) match the 'HIGH' region motif. L-tyrosine-binding residues include Tyr-169 and Gln-173. A 'KMSKS' region motif is present at residues 229–233 (KFGKS). Lys-232 contacts ATP. In terms of domain architecture, S4 RNA-binding spans 352–418 (LNIVELLVNA…GKKKNFVLTY (67 aa)).

This sequence belongs to the class-I aminoacyl-tRNA synthetase family. TyrS type 1 subfamily. In terms of assembly, homodimer.

It is found in the cytoplasm. The enzyme catalyses tRNA(Tyr) + L-tyrosine + ATP = L-tyrosyl-tRNA(Tyr) + AMP + diphosphate + H(+). Functionally, catalyzes the attachment of tyrosine to tRNA(Tyr) in a two-step reaction: tyrosine is first activated by ATP to form Tyr-AMP and then transferred to the acceptor end of tRNA(Tyr). The sequence is that of Tyrosine--tRNA ligase 1 from Streptococcus thermophilus (strain CNRZ 1066).